A 505-amino-acid polypeptide reads, in one-letter code: Structural protein 27 (505 aa).

3 hydrophobic regions span residues 20–40 (VSLI…FSPV), 423–443 (MKGI…MSTI), and 470–490 (IGLG…LILV).

The protein resides in the virion. In His1 virus (isolate Australia/Victoria) (His1V), this protein is Structural protein 27.